The chain runs to 138 residues: UPF0201 protein PYRAB09730 (138 aa).

The protein belongs to the UPF0201 family.

This is UPF0201 protein PYRAB09730 from Pyrococcus abyssi (strain GE5 / Orsay).